Reading from the N-terminus, the 150-residue chain is MKDLAKNKKALHDFSILETFEAGVVLKGSEVKALRAGRANLKDSFVRIIKGEIFLLNAHISHLDTTNSHFRPDERAPRKLLMHRKQIDKLFGSVTKDGLTMVALALYLNDKNIIKARVALAKGKNLHDKRETLKKREADMEARAAMKKFI.

It belongs to the SmpB family.

The protein resides in the cytoplasm. Its function is as follows. Required for rescue of stalled ribosomes mediated by trans-translation. Binds to transfer-messenger RNA (tmRNA), required for stable association of tmRNA with ribosomes. tmRNA and SmpB together mimic tRNA shape, replacing the anticodon stem-loop with SmpB. tmRNA is encoded by the ssrA gene; the 2 termini fold to resemble tRNA(Ala) and it encodes a 'tag peptide', a short internal open reading frame. During trans-translation Ala-aminoacylated tmRNA acts like a tRNA, entering the A-site of stalled ribosomes, displacing the stalled mRNA. The ribosome then switches to translate the ORF on the tmRNA; the nascent peptide is terminated with the 'tag peptide' encoded by the tmRNA and targeted for degradation. The ribosome is freed to recommence translation, which seems to be the essential function of trans-translation. This is SsrA-binding protein from Campylobacter curvus (strain 525.92).